Consider the following 79-residue polypeptide: Ixosin (79 aa).

Positions methionine 1 to aspartate 56 are cleaved as a propeptide — removed in mature form.

Functionally, has antifungal activity against C.albicans. Has antibacterial activity against the Gram-positive bacterium S.aureus and the Gram-negative bacterium E.coli. Lacks hemolytic activity against rabbit erythrocytes. The polypeptide is Ixosin (Ixodes sinensis (Hard tick)).